A 1186-amino-acid chain; its full sequence is DNA-directed RNA polymerase subunit beta (1186 aa).

Residues 1149-1186 (KEEDDDPSTSSDDLGFNIGARPDAAAKEDQVAEEPEFQ) are disordered.

This sequence belongs to the RNA polymerase beta chain family. In terms of assembly, the RNAP catalytic core consists of 2 alpha, 1 beta, 1 beta' and 1 omega subunit. When a sigma factor is associated with the core the holoenzyme is formed, which can initiate transcription.

The enzyme catalyses RNA(n) + a ribonucleoside 5'-triphosphate = RNA(n+1) + diphosphate. Functionally, DNA-dependent RNA polymerase catalyzes the transcription of DNA into RNA using the four ribonucleoside triphosphates as substrates. This Bifidobacterium adolescentis (strain ATCC 15703 / DSM 20083 / NCTC 11814 / E194a) protein is DNA-directed RNA polymerase subunit beta.